We begin with the raw amino-acid sequence, 424 residues long: Phosphoribosylamine--glycine ligase (424 aa).

The ATP-grasp domain occupies 107–313; the sequence is KTFMKKYGIP…FLETLLNFYE (207 aa). Residue 133–194 coordinates ATP; the sequence is VEKVGAPIVV…EEFLEGEEAS (62 aa). Mg(2+) contacts are provided by Glu-283 and Asn-285.

It belongs to the GARS family. Mg(2+) serves as cofactor. The cofactor is Mn(2+).

The catalysed reaction is 5-phospho-beta-D-ribosylamine + glycine + ATP = N(1)-(5-phospho-beta-D-ribosyl)glycinamide + ADP + phosphate + H(+). It functions in the pathway purine metabolism; IMP biosynthesis via de novo pathway; N(1)-(5-phospho-D-ribosyl)glycinamide from 5-phospho-alpha-D-ribose 1-diphosphate: step 2/2. The sequence is that of Phosphoribosylamine--glycine ligase from Aquifex aeolicus (strain VF5).